Reading from the N-terminus, the 406-residue chain is MDAVVLSIGTELIDGHLTDTNATFLARELAALGIPLRWVAQVGDDLDWIVRMLRRAWEDASLIVTTGGIGPTEDDLTREAIAQLLAEPLTIDPALLEEIRAFFAARGLTMPERNAKQASRIPSCEPLPNPIGTAPGWFVRRDGHIIVTMPGVPREMMRMWHEQAVPRLLPSIGGGAIRFRTLKTIGLGESLVEERIHDLIATSRARIATYAKDDGVHVRITAHAPDAGAAERLLDEVERALRARLGSAVYGTDDTTLGGAILELLGRSGWTLAITEWASGSRLTSLLAEEPAAGQFLRTATILTSQPPLDSSLEEVARDLAQRTAVAAGSDCGLAIIVRIDPGPTADRSVGQAALAVSTPATVVTRTHQITSHPQEIRRRVGLWAAEFLRLALLEASIQESTATSA.

The protein belongs to the CinA family.

The protein is CinA-like protein of Thermomicrobium roseum (strain ATCC 27502 / DSM 5159 / P-2).